The primary structure comprises 431 residues: Beta-lactamase hydrolase-like protein (431 aa).

Residues histidine 212, histidine 214, and histidine 286 each contribute to the Zn(2+) site. Aspartate 309 serves as a coordination point for substrate.

Belongs to the metallo-beta-lactamase superfamily. Requires Zn(2+) as cofactor.

Could play a role in cell adherence or biofilm development. In Xylella fastidiosa (strain 9a5c), this protein is Beta-lactamase hydrolase-like protein.